Here is a 284-residue protein sequence, read N- to C-terminus: NAD kinase (284 aa).

Asp-67 acts as the Proton acceptor in catalysis. NAD(+)-binding positions include 67 to 68 (DG), 141 to 142 (ND), Arg-152, Lys-169, Asp-171, 182 to 187 (TGYSLS), and Gln-241.

This sequence belongs to the NAD kinase family. A divalent metal cation is required as a cofactor.

The protein localises to the cytoplasm. The enzyme catalyses NAD(+) + ATP = ADP + NADP(+) + H(+). In terms of biological role, involved in the regulation of the intracellular balance of NAD and NADP, and is a key enzyme in the biosynthesis of NADP. Catalyzes specifically the phosphorylation on 2'-hydroxyl of the adenosine moiety of NAD to yield NADP. In Geotalea daltonii (strain DSM 22248 / JCM 15807 / FRC-32) (Geobacter daltonii), this protein is NAD kinase.